The following is a 207-amino-acid chain: ATP-dependent Clp protease proteolytic subunit 1 (207 aa).

The active-site Nucleophile is the serine 103. The active site involves histidine 128.

This sequence belongs to the peptidase S14 family. As to quaternary structure, fourteen ClpP subunits assemble into 2 heptameric rings which stack back to back to give a disk-like structure with a central cavity, resembling the structure of eukaryotic proteasomes.

It localises to the cytoplasm. The catalysed reaction is Hydrolysis of proteins to small peptides in the presence of ATP and magnesium. alpha-casein is the usual test substrate. In the absence of ATP, only oligopeptides shorter than five residues are hydrolyzed (such as succinyl-Leu-Tyr-|-NHMec, and Leu-Tyr-Leu-|-Tyr-Trp, in which cleavage of the -Tyr-|-Leu- and -Tyr-|-Trp bonds also occurs).. Functionally, cleaves peptides in various proteins in a process that requires ATP hydrolysis. Has a chymotrypsin-like activity. Plays a major role in the degradation of misfolded proteins. This Synechococcus sp. (strain CC9605) protein is ATP-dependent Clp protease proteolytic subunit 1.